The following is a 41-amino-acid chain: Peptide Hact-SCRiP1 (41 aa).

4 disulfide bridges follow: C5–C37, C12–C31, C19–C38, and C26–C39.

Expressed in tentacles.

It localises to the nematocyst. It is found in the secreted. In terms of biological role, peptide with unknown function. Does not exhibit any effect on human ion channel TRPV1 in a Xenopus laevis oocytes assay. In Heliofungia actiniformis (Mushroom coral), this protein is Peptide Hact-SCRiP1.